A 345-amino-acid chain; its full sequence is Biotin synthase (345 aa).

The Radical SAM core domain occupies 67-295 (YKVQLASLLS…KSRIRLSAGR (229 aa)). C82, C86, and C89 together coordinate [4Fe-4S] cluster. 4 residues coordinate [2Fe-2S] cluster: C126, C158, C218, and R290.

It belongs to the radical SAM superfamily. Biotin synthase family. As to quaternary structure, homodimer. The cofactor is [4Fe-4S] cluster. It depends on [2Fe-2S] cluster as a cofactor.

The catalysed reaction is (4R,5S)-dethiobiotin + (sulfur carrier)-SH + 2 reduced [2Fe-2S]-[ferredoxin] + 2 S-adenosyl-L-methionine = (sulfur carrier)-H + biotin + 2 5'-deoxyadenosine + 2 L-methionine + 2 oxidized [2Fe-2S]-[ferredoxin]. Its pathway is cofactor biosynthesis; biotin biosynthesis; biotin from 7,8-diaminononanoate: step 2/2. Catalyzes the conversion of dethiobiotin (DTB) to biotin by the insertion of a sulfur atom into dethiobiotin via a radical-based mechanism. This chain is Biotin synthase, found in Prochlorococcus marinus (strain NATL2A).